Consider the following 324-residue polypeptide: D-alanine--D-alanine ligase (324 aa).

Positions 116-311 constitute an ATP-grasp domain; that stretch reads KQVWHTLGIP…FQQLVLAILA (196 aa). Position 142–197 (142–197) interacts with ATP; sequence ATELGFPLIVKPAHEGSSIGMAKVSSASELIDAWKAASTYDSQVLVEQWIHGPEFT. Residues D265, E278, and N280 each coordinate Mg(2+).

This sequence belongs to the D-alanine--D-alanine ligase family. The cofactor is Mg(2+). Mn(2+) is required as a cofactor.

Its subcellular location is the cytoplasm. It carries out the reaction 2 D-alanine + ATP = D-alanyl-D-alanine + ADP + phosphate + H(+). The protein operates within cell wall biogenesis; peptidoglycan biosynthesis. Cell wall formation. This chain is D-alanine--D-alanine ligase, found in Pseudomonas fluorescens (strain Pf0-1).